Reading from the N-terminus, the 195-residue chain is ATP-dependent Clp protease proteolytic subunit 2 (195 aa).

Residue serine 98 is the Nucleophile of the active site. The active site involves histidine 123.

The protein belongs to the peptidase S14 family. As to quaternary structure, fourteen ClpP subunits assemble into 2 heptameric rings which stack back to back to give a disk-like structure with a central cavity, resembling the structure of eukaryotic proteasomes.

Its subcellular location is the cytoplasm. It catalyses the reaction Hydrolysis of proteins to small peptides in the presence of ATP and magnesium. alpha-casein is the usual test substrate. In the absence of ATP, only oligopeptides shorter than five residues are hydrolyzed (such as succinyl-Leu-Tyr-|-NHMec, and Leu-Tyr-Leu-|-Tyr-Trp, in which cleavage of the -Tyr-|-Leu- and -Tyr-|-Trp bonds also occurs).. In terms of biological role, cleaves peptides in various proteins in a process that requires ATP hydrolysis. Has a chymotrypsin-like activity. Plays a major role in the degradation of misfolded proteins. This Rhodopirellula baltica (strain DSM 10527 / NCIMB 13988 / SH1) protein is ATP-dependent Clp protease proteolytic subunit 2.